The sequence spans 206 residues: Urease accessory protein UreG (206 aa).

11–18 is a binding site for GTP; that stretch reads GPVGAGKT.

This sequence belongs to the SIMIBI class G3E GTPase family. UreG subfamily. Homodimer. UreD, UreF and UreG form a complex that acts as a GTP-hydrolysis-dependent molecular chaperone, activating the urease apoprotein by helping to assemble the nickel containing metallocenter of UreC. The UreE protein probably delivers the nickel.

Its subcellular location is the cytoplasm. Facilitates the functional incorporation of the urease nickel metallocenter. This process requires GTP hydrolysis, probably effectuated by UreG. This chain is Urease accessory protein UreG, found in Ureaplasma parvum serovar 3 (strain ATCC 700970).